Reading from the N-terminus, the 509-residue chain is Phytase A (509 aa).

An N-terminal signal peptide occupies residues 1 to 15 (MFLLMVPLFSYLAAA). A disulfide bond links cysteine 27 and cysteine 36. 1D-myo-inositol hexakisphosphate is bound by residues glutamine 46, tyrosine 47, arginine 75, histidine 76, arginine 79, threonine 82, and arginine 164. 4 cysteine pairs are disulfide-bonded: cysteine 65-cysteine 444, cysteine 216-cysteine 507, cysteine 266-cysteine 295, and cysteine 478-cysteine 486. The active-site Nucleophile is histidine 76. Asparagine 171 and asparagine 208 each carry an N-linked (GlcNAc...) asparagine glycan. Lysine 314 is a binding site for 1D-myo-inositol hexakisphosphate. N-linked (GlcNAc...) asparagine glycosylation is found at asparagine 348, asparagine 352, and asparagine 367. 1D-myo-inositol hexakisphosphate-binding residues include histidine 376 and aspartate 377. N-linked (GlcNAc...) asparagine glycosylation occurs at asparagine 401.

This sequence belongs to the histidine acid phosphatase family. In terms of assembly, monomer.

It localises to the secreted. The catalysed reaction is 1D-myo-inositol hexakisphosphate + H2O = 1D-myo-inositol 1,2,4,5,6-pentakisphosphate + phosphate. It carries out the reaction 1D-myo-inositol 1,2,4,5,6-pentakisphosphate + H2O = 1D-myo-inositol 1,2,5,6-tetrakisphosphate + phosphate. It catalyses the reaction 1D-myo-inositol 1,2,5,6-tetrakisphosphate + H2O = 1D-myo-inositol 1,2,6-trisphosphate + phosphate. The enzyme catalyses 1D-myo-inositol 1,2,6-trisphosphate + H2O = 1D-myo-inositol 1,2-bisphosphate + phosphate. The catalysed reaction is 1D-myo-inositol 1,2-bisphosphate + H2O = 1D-myo-inositol 2-phosphate + phosphate. Catalyzes the phosphate monoester hydrolysis of phytic acid (myo-inositol hexakisphosphate), which results in the stepwise formation of myo-inositol pentakis-, tetrakis-, tris-, bis-, and monophosphates, as well as the liberation of inorganic phosphate. Myo-inositol 2-monophosphate is the end product. Is also able to dephosphorylate the classic acid phosphatase substrate p-nitrophenyl phosphate. This chain is Phytase A (pht-1), found in Neurospora crassa (strain ATCC 24698 / 74-OR23-1A / CBS 708.71 / DSM 1257 / FGSC 987).